The sequence spans 217 residues: Small ribosomal subunit protein uS3 (217 aa).

The 71-residue stretch at 40 to 110 folds into the KH type-2 domain; it reads IRDLINKGFN…EVYINIHEVR (71 aa).

It belongs to the universal ribosomal protein uS3 family. In terms of assembly, part of the 30S ribosomal subunit. Forms a tight complex with proteins S10 and S14.

Binds the lower part of the 30S subunit head. Binds mRNA in the 70S ribosome, positioning it for translation. This is Small ribosomal subunit protein uS3 from Rickettsia akari (strain Hartford).